We begin with the raw amino-acid sequence, 526 residues long: MSYPQEVNKRRTFAIISHPDAGKTTITEKVLLYGNAIQTAGSVKGKGSSQHAKSDWMEMEKQRGISITTSVMQFPYNNCLVNLLDTPGHEDFSEDTYRTLTAVDSCLMVIDSAKGVEERTIKLMEVTRLRDTPILTFMNKLDRDIRDPMELLDEVESILKIRCAPITWPIGCGKLFKGVYHLAKDEMYLYKSGQGSTIQEIQIVKGLDNPELDVMVGDDLANQLREELELVQGASNEFDHQAFINGELTPVFFGTALGNFGVDHFLDGLTEWAPKPQARVADIRTVESAEQKFSGFVFKIQANMDPKHRDRVAFMRVVSGKYEKGMKLKHVRLGKEVVISDALIFMAGDRSQAEQAYAGDIIGLHNHGTIQIGDTFTQGENLKFIGIPNFAPELFRRIRLKDPLKQKQLLKGLIQLSEEGAVQVFRPLINNDLIVGAVGVLQFDVVVSRLKSEYNVEAIYETVNVATARWVECTDAKKFEEFKRKNEQNLALDGGDNLTYIAPTMVNLNLAIERYPDVVFFKTREH.

The region spanning 8 to 277 (NKRRTFAIIS…GLTEWAPKPQ (270 aa)) is the tr-type G domain. GTP-binding positions include 17-24 (SHPDAGKT), 85-89 (DTPGH), and 139-142 (NKLD).

This sequence belongs to the TRAFAC class translation factor GTPase superfamily. Classic translation factor GTPase family. PrfC subfamily.

The protein localises to the cytoplasm. Increases the formation of ribosomal termination complexes and stimulates activities of RF-1 and RF-2. It binds guanine nucleotides and has strong preference for UGA stop codons. It may interact directly with the ribosome. The stimulation of RF-1 and RF-2 is significantly reduced by GTP and GDP, but not by GMP. This chain is Peptide chain release factor 3, found in Haemophilus ducreyi (strain 35000HP / ATCC 700724).